A 974-amino-acid chain; its full sequence is Membrane-associated phosphatidylinositol transfer protein 3 (974 aa).

Ser-30, Ser-31, Ser-109, Ser-295, Ser-298, Ser-321, Ser-343, and Ser-495 each carry phosphoserine. The interval 284-304 (GDSPASSSRKGSISSTQDTPV) is disordered. Polar residues predominate over residues 292–302 (RKGSISSTQDT). 2 disordered regions span residues 323–346 (IDIS…SDSS) and 491–536 (SSRD…SMAP). Positions 390–594 (FDFDVSDFFL…VAFILRQVMR (205 aa)) constitute a DDHD domain. Low complexity predominate over residues 520–533 (EGSSHSESSESSDS). Residues Ser-612, Ser-907, Ser-928, and Ser-946 each carry the phosphoserine modification. The disordered stretch occupies residues 927-974 (MSVQQPDPPAANPKPERAQSQPESDKDHERPLPALSWARGPPKFESVP).

Belongs to the PtdIns transfer protein family. PI transfer class IIA subfamily. In terms of assembly, interacts with PTK2B via its C-terminus. Detected in brain and spleen, and at low levels in ovary.

It localises to the endomembrane system. In terms of biological role, catalyzes the transfer of phosphatidylinositol and phosphatidylcholine between membranes (in vitro). Binds calcium ions. The chain is Membrane-associated phosphatidylinositol transfer protein 3 (PITPNM3) from Homo sapiens (Human).